The primary structure comprises 443 residues: Protein king tubby (443 aa).

Disordered stretches follow at residues 57-80 (TNGSPGGINPVAMNTSRNHSNNMR) and 98-191 (HELE…EGDV). The segment covering 68-80 (AMNTSRNHSNNMR) has biased composition (polar residues). Positions 113 to 128 (QHQQSASHSANSTQSQ) are enriched in low complexity. Ser-136 carries the post-translational modification Phosphoserine. Positions 177–186 (NGTGNGTGGE) are enriched in gly residues.

Belongs to the TUB family.

The protein resides in the cytoplasm. The protein localises to the nucleus. It localises to the cell projection. Its subcellular location is the cilium membrane. It is found in the rhabdomere. This is Protein king tubby from Drosophila simulans (Fruit fly).